The chain runs to 1588 residues: MVQLAKVPILGNDIIHVGYNIHDHLVETIIKHCPSSTYVICNDTNLSKVPYYQQLVLEFKASLPEGSRLLTYVVKPGETSKSRETKAQLEDYLLVEGCTRDTVMIAIGGGVIGDMIGFVASTFMRGVRVVQVPTSLLAMVDSSIGGKTAIDTPLGKNFIGAFWQPKFVLVDIKWLETLAKREFINGMAEVIKTACIWNADEFTRLESNASLFLNVVNGAKNVKVTNQLTNEIDEISNTDIEAMLDHTYKLVLESIKVKAEVVSSDERESSLRNLLNFGHSIGHAYEAILTPQALHGECVSIGMVKEAELSRYFGILSPTQVARLSKILVAYGLPVSPDEKWFKELTLHKKTPLDILLKKMSIDKKNEGSKKKVVILESIGKCYGDSAQFVSDEDLRFILTDETLVYPFKDIPADQQKVVIPPGSKSISNRALIIAALGEGQCKIKNLLHSDDTKHMLTAVHELKGATISWEDNGETVVVEGHGGSTLSACADPLYLGNAGTASRFLTSLAALVNSTPSQKYIVLTGNARMQQRPIAPLVDSLRANGTKIEYLNNEGSLPIKVYTDSVFKGGRIELAATVSSQYVSSILMCAPYAEEPVTLALVGGKPISKLYVDMTIKMMEKFGINVETSTTEPYTYYIPKGHYINPSEYVIESDASSATYPLAFAAMTGTTVTVPNIGFESLQGDARFARDVLKPMGCKITQTATSTTVSGPPVGTLKPLKHVDMEPMTDAFLTACVVAAISHDSDPNSANTTTIEGIANQRVKECNRILAMATELAKFGVKTTELPDGIQVHGLNSIKDLKVPSDSSGPVGVCTYDDHRVAMSFSLLAGMVNSQNERDEVANPVRILERHCTGKTWPGWWDVLHSELGAKLDGAEPLECTSKKNSKKSVVIIGMRAAGKTTISKWCASALGYKLVDLDELFEQQHNNQSVKQFVVENGWEKFREEETRIFKEVIQNYGDDGYVFSTGGGIVESAESRKALKDFASSGGYVLHLHRDIEETIVFLQSDPSRPAYVEEIREVWNRREEWYKECSNFSFFAPHCSAEAEFQALRRSFSKYIATITGVREIEIPSGRSAFVCLTFDDLTEQTENLTPICYGCEAVEVRVDHLANYSADFVSKQLSILRKATDSIPIIFTVRTKKQGGNFPDEEFKTLRELYDIALKNGVEFLDLELTLPTDIQYEVINKRGNTKIIGSHHDFQGLYSWDDAEWENRFNQALTLDVDVVKFVGTAVNFEDNLRLEHFRDTHKNKPLIAVNMTSKGSISRVLNNVLTPVTSDLLPNSAAPGQLTVAQINKMYTSMGGIEPKELFVVGKPIGHSRSPILHNTGYEILGLPHKFDKFETESAQLVKEKLLDGNKNFGGAAVTIPLKLDIMQYMDELTDAAKVIGAVNTVIPLGNKKFKGDNTDWLGIRNALINNGVPEYVGHTAGLVIGAGGTSRAALYALHSLGCKKIFIINRTTSKLKPLIESLPSEFNIIGIESTKSIEEIKEHVGVAVSCVPADKPLDDELLSKLERFLVKGAHAAFAPTLLEAAYKPSVTPVMTISQDKYQWHVVPGSQMLVHQGVAQFEKWTGFKAPFKAIFDAVTKE.

The segment at 1–392 (MVQLAKVPIL…YGDSAQFVSD (392 aa)) is 3-dehydroquinate synthase. NAD(+) is bound by residues 43-45 (DTN), 78-81 (ETSK), 109-111 (GGV), and D114. R125 contributes to the 7-phospho-2-dehydro-3-deoxy-D-arabino-heptonate binding site. An NAD(+)-binding site is contributed by 134–135 (TS). 2 residues coordinate 7-phospho-2-dehydro-3-deoxy-D-arabino-heptonate: D141 and K147. K156 lines the NAD(+) pocket. Residue N157 coordinates 7-phospho-2-dehydro-3-deoxy-D-arabino-heptonate. NAD(+) is bound by residues 174–177 (WLET) and N185. Residue E189 participates in Zn(2+) binding. 7-phospho-2-dehydro-3-deoxy-D-arabino-heptonate is bound by residues 189–192 (EVIK) and K258. Residue E268 is the Proton acceptor; for 3-dehydroquinate synthase activity of the active site. 7-phospho-2-dehydro-3-deoxy-D-arabino-heptonate contacts are provided by residues 272-276 (RNLLN) and H279. A Zn(2+)-binding site is contributed by H279. H283 functions as the Proton acceptor; for 3-dehydroquinate synthase activity in the catalytic mechanism. 7-phospho-2-dehydro-3-deoxy-D-arabino-heptonate-binding residues include H295 and K364. H295 contributes to the Zn(2+) binding site. Residues 405-871 (VYPFKDIPAD…WDVLHSELGA (467 aa)) are EPSP synthase. The active-site For EPSP synthase activity is the C853. The shikimate kinase stretch occupies residues 890-1080 (SVVIIGMRAA…IPSGRSAFVC (191 aa)). 895–902 (GMRAAGKT) serves as a coordination point for ATP. Positions 1081–1293 (LTFDDLTEQT…AAPGQLTVAQ (213 aa)) are 3-dehydroquinase. Catalysis depends on H1198, which acts as the Proton acceptor; for 3-dehydroquinate dehydratase activity. Residue K1227 is the Schiff-base intermediate with substrate; for 3-dehydroquinate dehydratase activity of the active site. Residues 1306–1588 (PKELFVVGKP…KAIFDAVTKE (283 aa)) are shikimate dehydrogenase.

In the N-terminal section; belongs to the sugar phosphate cyclases superfamily. Dehydroquinate synthase family. This sequence in the 2nd section; belongs to the EPSP synthase family. It in the 3rd section; belongs to the shikimate kinase family. The protein in the 4th section; belongs to the type-I 3-dehydroquinase family. In the C-terminal section; belongs to the shikimate dehydrogenase family. In terms of assembly, homodimer. The cofactor is Zn(2+).

Its subcellular location is the cytoplasm. The enzyme catalyses 7-phospho-2-dehydro-3-deoxy-D-arabino-heptonate = 3-dehydroquinate + phosphate. It carries out the reaction 3-dehydroquinate = 3-dehydroshikimate + H2O. It catalyses the reaction shikimate + NADP(+) = 3-dehydroshikimate + NADPH + H(+). The catalysed reaction is shikimate + ATP = 3-phosphoshikimate + ADP + H(+). The enzyme catalyses 3-phosphoshikimate + phosphoenolpyruvate = 5-O-(1-carboxyvinyl)-3-phosphoshikimate + phosphate. The protein operates within metabolic intermediate biosynthesis; chorismate biosynthesis; chorismate from D-erythrose 4-phosphate and phosphoenolpyruvate: step 2/7. It participates in metabolic intermediate biosynthesis; chorismate biosynthesis; chorismate from D-erythrose 4-phosphate and phosphoenolpyruvate: step 3/7. Its pathway is metabolic intermediate biosynthesis; chorismate biosynthesis; chorismate from D-erythrose 4-phosphate and phosphoenolpyruvate: step 4/7. It functions in the pathway metabolic intermediate biosynthesis; chorismate biosynthesis; chorismate from D-erythrose 4-phosphate and phosphoenolpyruvate: step 5/7. The protein operates within metabolic intermediate biosynthesis; chorismate biosynthesis; chorismate from D-erythrose 4-phosphate and phosphoenolpyruvate: step 6/7. Its function is as follows. The AROM polypeptide catalyzes 5 consecutive enzymatic reactions in prechorismate polyaromatic amino acid biosynthesis. The protein is Pentafunctional AROM polypeptide of Saccharomyces cerevisiae (strain JAY291) (Baker's yeast).